Here is a 61-residue protein sequence, read N- to C-terminus: Large ribosomal subunit protein uL30 (61 aa).

Belongs to the universal ribosomal protein uL30 family. In terms of assembly, part of the 50S ribosomal subunit.

This Lactobacillus acidophilus (strain ATCC 700396 / NCK56 / N2 / NCFM) protein is Large ribosomal subunit protein uL30.